We begin with the raw amino-acid sequence, 817 residues long: LPS-assembly protein LptD (817 aa).

Residues 1–26 (MPALVVSPDLVRGAAGASAAPTPAPA) form the signal peptide. The disordered stretch occupies residues 1 to 101 (MPALVVSPDL…ARKPGSTEVR (101 aa)). The span at 13 to 90 (GAAGASAAPT…PAASASPADA (78 aa)) shows a compositional bias: low complexity.

This sequence belongs to the LptD family. As to quaternary structure, component of the lipopolysaccharide transport and assembly complex. Interacts with LptE and LptA.

The protein localises to the cell outer membrane. Together with LptE, is involved in the assembly of lipopolysaccharide (LPS) at the surface of the outer membrane. The protein is LPS-assembly protein LptD of Azoarcus sp. (strain BH72).